The following is a 1053-amino-acid chain: Mediator of RNA polymerase II transcription subunit 16 (1053 aa).

The interval 139–170 (KTEGNTEKNKDTKQIGNGSGTNGHGDSPINTP) is disordered. Over residues 142–151 (GNTEKNKDTK) the composition is skewed to basic and acidic residues.

Belongs to the Mediator complex subunit 16 family. As to quaternary structure, component of the Mediator complex.

The protein localises to the nucleus. Functionally, component of the Mediator complex, a coactivator involved in the regulated transcription of nearly all RNA polymerase II-dependent genes. Mediator functions as a bridge to convey information from gene-specific regulatory proteins to the basal RNA polymerase II transcription machinery. Mediator is recruited to promoters by direct interactions with regulatory proteins and serves as a scaffold for the assembly of a functional preinitiation complex with RNA polymerase II and the general transcription factors. The sequence is that of Mediator of RNA polymerase II transcription subunit 16 (SIN4) from Candida albicans (strain SC5314 / ATCC MYA-2876) (Yeast).